The sequence spans 219 residues: Thymidylate kinase (219 aa).

An ATP-binding site is contributed by 9–16; the sequence is GIEGCGKT.

It belongs to the thymidylate kinase family.

The enzyme catalyses dTMP + ATP = dTDP + ADP. Phosphorylation of dTMP to form dTDP in both de novo and salvage pathways of dTTP synthesis. The sequence is that of Thymidylate kinase from Syntrophus aciditrophicus (strain SB).